An 80-amino-acid chain; its full sequence is uncharacterized protein (80 aa).

Positions 1-15 (MVKLSFTLRFGDVWV) are cleaved as a signal peptide.

This is an uncharacterized protein from Archaeoglobus fulgidus (strain ATCC 49558 / DSM 4304 / JCM 9628 / NBRC 100126 / VC-16).